The chain runs to 138 residues: Large ribosomal subunit protein bL17 (138 aa).

This sequence belongs to the bacterial ribosomal protein bL17 family. As to quaternary structure, part of the 50S ribosomal subunit. Contacts protein L32.

This chain is Large ribosomal subunit protein bL17, found in Methylorubrum populi (strain ATCC BAA-705 / NCIMB 13946 / BJ001) (Methylobacterium populi).